The chain runs to 407 residues: Phosphopentomutase (407 aa).

The Mn(2+) site is built by Asp10, Asp306, His311, Asp347, His348, and His359.

Belongs to the phosphopentomutase family. Requires Mn(2+) as cofactor.

It localises to the cytoplasm. It catalyses the reaction 2-deoxy-alpha-D-ribose 1-phosphate = 2-deoxy-D-ribose 5-phosphate. The enzyme catalyses alpha-D-ribose 1-phosphate = D-ribose 5-phosphate. It functions in the pathway carbohydrate degradation; 2-deoxy-D-ribose 1-phosphate degradation; D-glyceraldehyde 3-phosphate and acetaldehyde from 2-deoxy-alpha-D-ribose 1-phosphate: step 1/2. Isomerase that catalyzes the conversion of deoxy-ribose 1-phosphate (dRib-1-P) and ribose 1-phosphate (Rib-1-P) to deoxy-ribose 5-phosphate (dRib-5-P) and ribose 5-phosphate (Rib-5-P), respectively. In Buchnera aphidicola subsp. Acyrthosiphon pisum (strain APS) (Acyrthosiphon pisum symbiotic bacterium), this protein is Phosphopentomutase.